The chain runs to 446 residues: Histidine--tRNA ligase (446 aa).

This sequence belongs to the class-II aminoacyl-tRNA synthetase family. Homodimer.

It is found in the cytoplasm. It catalyses the reaction tRNA(His) + L-histidine + ATP = L-histidyl-tRNA(His) + AMP + diphosphate + H(+). The sequence is that of Histidine--tRNA ligase from Burkholderia cenocepacia (strain ATCC BAA-245 / DSM 16553 / LMG 16656 / NCTC 13227 / J2315 / CF5610) (Burkholderia cepacia (strain J2315)).